The following is a 416-amino-acid chain: S-layer protein B (416 aa).

An N-terminal signal peptide occupies residues methionine 1 to alanine 20. Residues isoleucine 310–threonine 330 are a coiled coil. The chain crosses the membrane as a helical span at residues isoleucine 392–phenylalanine 412.

Belongs to the Sulfolobales SlaB family. The mushroom-shaped unit cells of the Sulfolobales' S-layers may consist of three SlaB subunits and six SlaA subunits.

The protein localises to the secreted. Its subcellular location is the cell wall. It localises to the S-layer. It is found in the cell membrane. S-layer small protein. May anchor the complex to the cell membrane. This is S-layer protein B from Metallosphaera sedula (strain ATCC 51363 / DSM 5348 / JCM 9185 / NBRC 15509 / TH2).